A 306-amino-acid chain; its full sequence is Homoserine kinase (306 aa).

ATP is bound at residue 84–94 (PAGLGLGSSGA).

Belongs to the GHMP kinase family. Homoserine kinase subfamily.

The protein localises to the cytoplasm. It carries out the reaction L-homoserine + ATP = O-phospho-L-homoserine + ADP + H(+). It participates in amino-acid biosynthesis; L-threonine biosynthesis; L-threonine from L-aspartate: step 4/5. Its function is as follows. Catalyzes the ATP-dependent phosphorylation of L-homoserine to L-homoserine phosphate. The sequence is that of Homoserine kinase from Sulfolobus acidocaldarius (strain ATCC 33909 / DSM 639 / JCM 8929 / NBRC 15157 / NCIMB 11770).